The primary structure comprises 316 residues: Nautilin-63 (316 aa).

4 disordered regions span residues 1 to 26 (IPDL…GPRG), 149 to 173 (PFPT…VTPF), 189 to 238 (DSRC…GIAS), and 259 to 278 (PPTS…GLNK). Positions 10 to 26 (TLPVLTKGPTGLLGPRG) are enriched in low complexity. 3 stretches are compositionally biased toward polar residues: residues 152–163 (TSRSTYGPSGSQ), 207–216 (GHSSPATLNS), and 269–278 (SGYTSDGLNK).

In terms of processing, glycosylated; contains mainly glucose, galactose, galactosamine, glucosamine and glucuronic acid. Component of the acid-soluble organic matrix of nacreous shell layers (at protein level).

It is found in the secreted. Its function is as follows. Involved in nacre formation. Affects morphology of calcite crystals in vitro but does not inhibit their formation. Binds chitin. The protein is Nautilin-63 of Nautilus macromphalus (Bellybutton nautilus).